The sequence spans 353 residues: Photosystem II protein D1 (353 aa).

The residue at position 2 (threonine 2) is an N-acetylthreonine. Residue threonine 2 is modified to Phosphothreonine. The next 3 membrane-spanning stretches (helical) occupy residues 29-46 (YIGW…TATS), 118-133 (HFLL…EWEL), and 142-156 (WIAV…AATA). Histidine 118 contacts chlorophyll a. Tyrosine 126 is a binding site for pheophytin a. Aspartate 170 and glutamate 189 together coordinate [CaMn4O5] cluster. The chain crosses the membrane as a helical span at residues 197–218 (FHMLGVAGVFGGSLFSAMHGSL). Histidine 198 provides a ligand contact to chlorophyll a. Residues histidine 215 and 264–265 (SF) each bind a quinone. Histidine 215 serves as a coordination point for Fe cation. Position 272 (histidine 272) interacts with Fe cation. The chain crosses the membrane as a helical span at residues 274-288 (FLAAWPVVGIWFTAL). Residues histidine 332, glutamate 333, aspartate 342, and alanine 344 each contribute to the [CaMn4O5] cluster site. The propeptide occupies 345–353 (AIEAPSTNG).

It belongs to the reaction center PufL/M/PsbA/D family. As to quaternary structure, PSII is composed of 1 copy each of membrane proteins PsbA, PsbB, PsbC, PsbD, PsbE, PsbF, PsbH, PsbI, PsbJ, PsbK, PsbL, PsbM, PsbT, PsbX, PsbY, PsbZ, Psb30/Ycf12, at least 3 peripheral proteins of the oxygen-evolving complex and a large number of cofactors. It forms dimeric complexes. The cofactor is The D1/D2 heterodimer binds P680, chlorophylls that are the primary electron donor of PSII, and subsequent electron acceptors. It shares a non-heme iron and each subunit binds pheophytin, quinone, additional chlorophylls, carotenoids and lipids. D1 provides most of the ligands for the Mn4-Ca-O5 cluster of the oxygen-evolving complex (OEC). There is also a Cl(-1) ion associated with D1 and D2, which is required for oxygen evolution. The PSII complex binds additional chlorophylls, carotenoids and specific lipids.. Tyr-161 forms a radical intermediate that is referred to as redox-active TyrZ, YZ or Y-Z. Post-translationally, C-terminally processed by CTPA; processing is essential to allow assembly of the oxygen-evolving complex and thus photosynthetic growth.

It is found in the plastid. Its subcellular location is the chloroplast thylakoid membrane. The enzyme catalyses 2 a plastoquinone + 4 hnu + 2 H2O = 2 a plastoquinol + O2. Functionally, photosystem II (PSII) is a light-driven water:plastoquinone oxidoreductase that uses light energy to abstract electrons from H(2)O, generating O(2) and a proton gradient subsequently used for ATP formation. It consists of a core antenna complex that captures photons, and an electron transfer chain that converts photonic excitation into a charge separation. The D1/D2 (PsbA/PsbD) reaction center heterodimer binds P680, the primary electron donor of PSII as well as several subsequent electron acceptors. The polypeptide is Photosystem II protein D1 (Petunia hybrida (Petunia)).